The primary structure comprises 139 residues: GPI-anchored protein 53 (139 aa).

Residues methionine 1 to alanine 17 form the signal peptide. Composition is skewed to low complexity over residues threonine 57–threonine 69 and threonine 77–serine 101. A disordered region spans residues threonine 57–threonine 115. A glycan (N-linked (GlcNAc...) asparagine) is linked at asparagine 93. Glycine 116 carries GPI-anchor amidated glycine lipidation. A propeptide spans glycine 117 to leucine 139 (removed in mature form).

The protein localises to the cell membrane. This Candida albicans (strain SC5314 / ATCC MYA-2876) (Yeast) protein is GPI-anchored protein 53 (PGA53).